Reading from the N-terminus, the 780-residue chain is Translation initiation factor IF-2 (780 aa).

The interval 44 to 194 (RQLDNAVDGT…TPPKPKELPE (151 aa)) is disordered. Basic and acidic residues predominate over residues 53 to 65 (TNKKAEAPKKETT). Over residues 66–81 (SNENGNSKGPNKPNMT) the composition is skewed to polar residues. Low complexity-rich tracts occupy residues 82 to 93 (NSNEKSNKPNKP) and 117 to 168 (ANTS…NNKG). A tr-type G domain is found at 281 to 450 (ERPPVVTIMG…LLVSEVEELK (170 aa)). Residues 290–297 (GHVDHGKT) are G1. 290–297 (GHVDHGKT) provides a ligand contact to GTP. The G2 stretch occupies residues 315 to 319 (GITQH). Residues 336-339 (DTPG) form a G3 region. GTP-binding positions include 336-340 (DTPGH) and 390-393 (NKID). Positions 390 to 393 (NKID) are G4. Positions 426–428 (SAK) are G5.

The protein belongs to the TRAFAC class translation factor GTPase superfamily. Classic translation factor GTPase family. IF-2 subfamily.

It is found in the cytoplasm. In terms of biological role, one of the essential components for the initiation of protein synthesis. Protects formylmethionyl-tRNA from spontaneous hydrolysis and promotes its binding to the 30S ribosomal subunits. Also involved in the hydrolysis of GTP during the formation of the 70S ribosomal complex. This chain is Translation initiation factor IF-2, found in Listeria welshimeri serovar 6b (strain ATCC 35897 / DSM 20650 / CCUG 15529 / CIP 8149 / NCTC 11857 / SLCC 5334 / V8).